The following is a 197-amino-acid chain: Mediator of RNA polymerase II transcription subunit 21 (197 aa).

The segment at 37–112 (PPPSVPSAVP…APPRPDSPNT (76 aa)) is disordered. Low complexity-rich tracts occupy residues 60–70 (PTSGTATNTPG) and 90–100 (PQMQQQHQEQP). Positions 140-183 (GIKSSEAEQQERIKQLAEELRVVEEERSARRRELRRLGEKVDGL) form a coiled coil.

The protein belongs to the Mediator complex subunit 21 family. In terms of assembly, component of the Mediator complex.

It is found in the nucleus. Its function is as follows. Component of the Mediator complex, a coactivator involved in the regulated transcription of nearly all RNA polymerase II-dependent genes. Mediator functions as a bridge to convey information from gene-specific regulatory proteins to the basal RNA polymerase II transcription machinery. Mediator is recruited to promoters by direct interactions with regulatory proteins and serves as a scaffold for the assembly of a functional preinitiation complex with RNA polymerase II and the general transcription factors. The chain is Mediator of RNA polymerase II transcription subunit 21 (SRB7) from Coccidioides immitis (strain RS) (Valley fever fungus).